Here is a 297-residue protein sequence, read N- to C-terminus: MAAWAPCRRWGWAAVSFGRHPGLSASLARKPPRAWWLSACRQKASLSFLNRSELPNLAYKRLKGKTPGIIFIPGYLSNMNGIKAVAVEEFCKSLGHAFIRFDYSGIGSSDGNLAECTVGKWRKDVLSILDDVAEGPQILVGSSLGGWLMLHAAIARPEKVIALIGIATAADGLVTQYHALPVETQKEIEMKGEWTLPSRYNKEGYFRIPYSFIKEAEHHCLLHSPIPVTCPVRLLHGMKDEIVPWQRSLQVADRIVSPDVDVILRKQGDHRMKEKADIHLLICTIDDLIDKLSTVVP.

The N-terminal 43 residues, 1 to 43 (MAAWAPCRRWGWAAVSFGRHPGLSASLARKPPRAWWLSACRQK), are a transit peptide targeting the mitochondrion. Residues 69 to 196 (IIFIPGYLSN…EIEMKGEWTL (128 aa)) form the AB hydrolase-1 domain. Active-site charge relay system residues include S143, D240, and H270.

The protein belongs to the AB hydrolase superfamily.

It is found in the mitochondrion. It catalyses the reaction S-hexadecanoyl-L-cysteinyl-[protein] + H2O = L-cysteinyl-[protein] + hexadecanoate + H(+). The catalysed reaction is mycophenolic acid O-acyl-beta-D-glucuronide + H2O = mycophenolate + D-glucuronate + H(+). Inhibited by palmostatin-B. In terms of biological role, acts as an acyl-protein thioesterase that hydrolyzes fatty acids from acylated residues in proteins. Regulates the mitochondrial S-depalmitoylation of the nucleophilic active site residue of peroxiredoxin-5/PRDX5, a key antioxidant protein, therefore modulating mitochondrial antioxidant ability. Also catalyzes the deglucuronidation of mycophenolic acid acyl-glucuronide, an active metabolite of the immunosuppressant drug mycophenolate. This is Palmitoyl-protein thioesterase ABHD10, mitochondrial from Mus musculus (Mouse).